The sequence spans 466 residues: ATP synthase subunit beta (466 aa).

Position 155 to 162 (155 to 162 (GGAGVGKT)) interacts with ATP.

This sequence belongs to the ATPase alpha/beta chains family. As to quaternary structure, F-type ATPases have 2 components, CF(1) - the catalytic core - and CF(0) - the membrane proton channel. CF(1) has five subunits: alpha(3), beta(3), gamma(1), delta(1), epsilon(1). CF(0) has three main subunits: a(1), b(2) and c(9-12). The alpha and beta chains form an alternating ring which encloses part of the gamma chain. CF(1) is attached to CF(0) by a central stalk formed by the gamma and epsilon chains, while a peripheral stalk is formed by the delta and b chains.

It localises to the cell inner membrane. It catalyses the reaction ATP + H2O + 4 H(+)(in) = ADP + phosphate + 5 H(+)(out). Produces ATP from ADP in the presence of a proton gradient across the membrane. The catalytic sites are hosted primarily by the beta subunits. The polypeptide is ATP synthase subunit beta (Azoarcus sp. (strain BH72)).